The sequence spans 956 residues: MAM domain-containing glycosylphosphatidylinositol anchor protein 1 (956 aa).

The first 18 residues, 1–18, serve as a signal peptide directing secretion; it reads MEVTCLLLLALIPFHCRG. Ig-like domains are found at residues 24–123 and 132–230; these read PAQA…KSIR and PVLT…KSIT. The N-linked (GlcNAc...) asparagine glycan is linked to Asn42. Intrachain disulfides connect Cys60/Cys108 and Cys157/Cys214. Residues Asn235, Asn257, and Asn307 are each glycosylated (N-linked (GlcNAc...) asparagine). 4 Ig-like domains span residues 240 to 323, 338 to 432, 440 to 534, and 539 to 632; these read PTLK…KTVN, PDMI…VEVN, PTIS…VQLT, and PEVE…FQVS. 4 cysteine pairs are disulfide-bonded: Cys262-Cys308, Cys357-Cys415, Cys463-Cys514, and Cys560-Cys616. Positions 644–744 constitute a Fibronectin type-III domain; that stretch reads TPNPTRSHKL…SRVIHYTEPI (101 aa). The region spanning 752–919 is the MAM domain; the sequence is NTCHFEDEKI…VTLKKGECPR (168 aa). Positions 780–789 are enriched in polar residues; sequence LTQNPKRSPN. Residues 780-799 are disordered; that stretch reads LTQNPKRSPNTGPPTDISGT. Ser933 is lipidated: GPI-anchor amidated serine. The propeptide at 934–956 is removed in mature form; sequence GAPRLSSLQLWGSMTIFLLALQR.

Interacts heterophilically through its MAM domain with proteins in axon-rich regions and through its Ig-like domains with proteins in differentiating muscle. Interacts (through the Ig-like domains) with NLGN2. As to expression, high levels detected in developing central and peripheral nervous systems with little expression elsewhere. In brain, highest levels in cerebral cortex and hindbrain at E15. At postnatal day 1, highest levels in basilar pons and superficial layers of the neocortex. In the developing spinal cord, restricted to a subpopulation of neurons in the dorsal and spinal ventral cord, probably D1 interneurons. Expressed in brain.

Its subcellular location is the cell membrane. In terms of biological role, required for radial migration of cortical neurons in the superficial layer of the neocortex. Plays a role in the formation or maintenance of inhibitory synapses. May function by inhibiting the activity of NLGN2. The sequence is that of MAM domain-containing glycosylphosphatidylinositol anchor protein 1 (Mdga1) from Rattus norvegicus (Rat).